The primary structure comprises 428 residues: Cyclic AMP-responsive element-binding protein 3-like protein 3-B (428 aa).

At 1–286 (MDHYSDQGGD…VMNGSNKPVQ (286 aa)) the chain is on the cytoplasmic side. The segment covering 67 to 83 (VSGSPVWSPSPSDSGIS) has biased composition (low complexity). Residues 67 to 104 (VSGSPVWSPSPSDSGISEDPHSDHIDSPPPNASPPMEP) form a disordered region. Residues 93–103 (SPPPNASPPME) show a composition bias toward pro residues. The region spanning 210–273 (ILKKIRRKIR…ISLMEQLRRL (64 aa)) is the bZIP domain. The interval 212 to 241 (KKIRRKIRNKQSAQESRKKKKEYIDGLESR) is basic motif. Residues 252–273 (LQRKVFQLEKCNISLMEQLRRL) form a leucine-zipper region. The helical; Signal-anchor for type II membrane protein transmembrane segment at 287 to 303 (AGTCVLVLLLSFTLILL) threads the bilayer. At 304 to 428 (PNLKPFTDTK…SRRSPHADDM (125 aa)) the chain is on the lumenal side. Positions 381-428 (TEYDPESHNHSFDQHDEHHHGDPITGHVATVTLNPRRGSRRSPHADDM) are disordered. The segment covering 385 to 402 (PESHNHSFDQHDEHHHGD) has biased composition (basic and acidic residues). N-linked (GlcNAc...) asparagine glycosylation occurs at N389.

Belongs to the bZIP family. ATF subfamily. Binds DNA as a dimer. In terms of processing, controlled by regulated intramembrane proteolysis (RIP). A fragment containing the cytoplasmic transcription factor domain is released by proteolysis. The cleavage seems to be performed sequentially by site-1 and site-2 proteases.

It is found in the endoplasmic reticulum membrane. The protein resides in the nucleus. Functionally, transcriptional activator. Binds the cAMP response element (CRE). Activates transcription through box-B element and CRE. Seems to function synergistically with atf6. Regulates FGF21 transcription. The chain is Cyclic AMP-responsive element-binding protein 3-like protein 3-B (creb3l3b) from Danio rerio (Zebrafish).